Consider the following 395-residue polypeptide: Teichoic acid D-alanyltransferase (395 aa).

Residues 1 to 6 lie on the Extracellular side of the membrane; it reads MTPYSS. A helical transmembrane segment spans residues 7 to 26; sequence FLFFILLGILLLPTIILGLN. Residues 27–30 are Cytoplasmic-facing; the sequence is GKRF. A helical membrane pass occupies residues 31 to 46; the sequence is QAYNMFISIIILALIF. Topologically, residues 47–50 are extracellular; the sequence is SHDL. A helical membrane pass occupies residues 51 to 76; the sequence is HGVIALCLFTIWQVLLISGYLAYRQK. Topologically, residues 77–79 are cytoplasmic; that stretch reads ANS. A helical membrane pass occupies residues 80–104; sequence GFVFCGAVIASILPLFLSKIWPFLS. Over 105–120 the chain is Extracellular; the sequence is HPQPHHPPHNLISFLG. The chain crosses the membrane as a helical span at residues 121-137; the sequence is ISYLTFKGVQLIMEARD. The Cytoplasmic portion of the chain corresponds to 138 to 145; it reads GLLKEQLP. The stretch at 146–175 is an intramembrane region; that stretch reads LHRLLYFILFFPTISSGPIDRYRRFVKDEQ. The Cytoplasmic segment spans residues 176 to 179; sequence KAWT. The chain crosses the membrane as a helical span at residues 180 to 223; that stretch reads KEEYADLLYTGIHKIFIGFLYKFIIGYAINTYFIMNLPAITHNK. Position 224 (isoleucine 224) is a topological domain, extracellular. The chain crosses the membrane as a helical span at residues 225–256; that stretch reads LGNLLYMYGYSMYLFFDFAGYTMFAVGVSYIM. The Cytoplasmic segment spans residues 257-266; that stretch reads GIKSPENFNK. Residues 267-303 lie within the membrane without spanning it; it reads PFISKNIKDFWNRWHMSLSFWFRDYVFMRFVFWMTKK. At 304-308 the chain is on the cytoplasmic side; the sequence is KWIKN. Residues 309–328 form a helical membrane-spanning segment; that stretch reads RMAVSNIGYFLLFMLMGVWH. Residue histidine 328 is part of the active site. Topologically, residues 329–333 are extracellular; sequence GLAPQ. The helical transmembrane segment at 334–351 threads the bilayer; sequence YIIYGLYHAVLMTCYNFF. The Cytoplasmic segment spans residues 352-364; the sequence is EKWNKKYKWLPSN. The helical transmembrane segment at 365–387 threads the bilayer; the sequence is RWTTILAIVITFHFVCFGFYIFS. The Extracellular portion of the chain corresponds to 388 to 395; the sequence is GKPFHHHH.

This sequence belongs to the membrane-bound acyltransferase family.

It localises to the cell membrane. Its pathway is cell wall biogenesis; lipoteichoic acid biosynthesis. Its function is as follows. O-acyltransferase that catalyzes D-alanylation of both teichoic acid and lipoteichoic acid (LTA). D-alanylation of LTA plays an important role in modulating the properties of the cell wall in Gram-positive bacteria, influencing the net charge of the cell wall. Catalyzes D-alanylation from DltC carrier protein. In Bacillus subtilis (strain 168), this protein is Teichoic acid D-alanyltransferase.